The following is a 153-amino-acid chain: MVKIHDGASQLGANVAAPRSPEEATLERVANPHEEALYLARFTAPEFTSLCPVTGQPDFALLVIDYAPDKWIVESKSLKLYLGSFRNRGAFHEDCTVRIGKDLVAVLAPRWLRIGGYWYPRGGMPIDVFWSTGAPPPGLWLPDQGVPPYRGRG.

The disordered stretch occupies residues 1–26; the sequence is MVKIHDGASQLGANVAAPRSPEEATL. The active-site Thioimide intermediate is the Cys51. Catalysis depends on Asp58, which acts as the Proton donor. Residues 73 to 75 and 92 to 93 contribute to the substrate site; these read VES and HE.

Belongs to the GTP cyclohydrolase I family. QueF type 1 subfamily.

Its subcellular location is the cytoplasm. The enzyme catalyses 7-aminomethyl-7-carbaguanine + 2 NADP(+) = 7-cyano-7-deazaguanine + 2 NADPH + 3 H(+). The protein operates within tRNA modification; tRNA-queuosine biosynthesis. Functionally, catalyzes the NADPH-dependent reduction of 7-cyano-7-deazaguanine (preQ0) to 7-aminomethyl-7-deazaguanine (preQ1). This chain is NADPH-dependent 7-cyano-7-deazaguanine reductase, found in Methylocella silvestris (strain DSM 15510 / CIP 108128 / LMG 27833 / NCIMB 13906 / BL2).